We begin with the raw amino-acid sequence, 274 residues long: Aspartate/glutamate leucyltransferase (274 aa).

It belongs to the R-transferase family. Bpt subfamily.

It is found in the cytoplasm. The catalysed reaction is N-terminal L-glutamyl-[protein] + L-leucyl-tRNA(Leu) = N-terminal L-leucyl-L-glutamyl-[protein] + tRNA(Leu) + H(+). It carries out the reaction N-terminal L-aspartyl-[protein] + L-leucyl-tRNA(Leu) = N-terminal L-leucyl-L-aspartyl-[protein] + tRNA(Leu) + H(+). Functions in the N-end rule pathway of protein degradation where it conjugates Leu from its aminoacyl-tRNA to the N-termini of proteins containing an N-terminal aspartate or glutamate. This Ruegeria sp. (strain TM1040) (Silicibacter sp.) protein is Aspartate/glutamate leucyltransferase.